Reading from the N-terminus, the 31-residue chain is Kallikrein-1 (31 aa).

Positions 1–31 (VIGGQECARDSHPWQAAVYHFSDIECGGVLV) constitute a Peptidase S1 domain.

This sequence belongs to the peptidase S1 family. Kallikrein subfamily.

It catalyses the reaction Preferential cleavage of Arg-|-Xaa bonds in small molecule substrates. Highly selective action to release kallidin (lysyl-bradykinin) from kininogen involves hydrolysis of Met-|-Xaa or Leu-|-Xaa.. In terms of biological role, glandular kallikreins cleave Met-Lys and Arg-Ser bonds in kininogen to release Lys-bradykinin. The chain is Kallikrein-1 from Cavia porcellus (Guinea pig).